A 716-amino-acid chain; its full sequence is Amino-acid acetyltransferase, mitochondrial (716 aa).

The N-terminal 44 residues, 1–44 (MSPHTGWPRTVNSSLLKKHRSSLCTCQHTSSFLPRSFSTTADRH), are a transit peptide targeting the mitochondrion. Disordered regions lie at residues 99–119 (YPKSPDENKPEPEKLATAPTL) and 487–508 (LSSSLPMSRRGPTNNGQGTVYP). Residues 102 to 112 (SPDENKPEPEK) are compositionally biased toward basic and acidic residues. Over residues 497–508 (GPTNNGQGTVYP) the composition is skewed to polar residues. Positions 537-706 (SRPRLKLDDP…YEAVCRSTQP (170 aa)) constitute an N-acetyltransferase domain.

Belongs to the acetyltransferase family.

The protein localises to the mitochondrion. The enzyme catalyses L-glutamate + acetyl-CoA = N-acetyl-L-glutamate + CoA + H(+). It functions in the pathway amino-acid biosynthesis; L-arginine biosynthesis; N(2)-acetyl-L-ornithine from L-glutamate: step 1/4. Functionally, N-acetylglutamate synthase involved in arginine biosynthesis. In Neosartorya fischeri (strain ATCC 1020 / DSM 3700 / CBS 544.65 / FGSC A1164 / JCM 1740 / NRRL 181 / WB 181) (Aspergillus fischerianus), this protein is Amino-acid acetyltransferase, mitochondrial (arg2).